Here is a 380-residue protein sequence, read N- to C-terminus: Cytochrome b (380 aa).

The next 4 membrane-spanning stretches (helical) occupy residues 33-53, 77-98, 113-133, and 178-198; these read FGSL…FLAM, WLIR…YMHI, WNIG…GYVL, and FFAF…IHLL. Heme b-binding residues include His-83 and His-97. Positions 182 and 196 each coordinate heme b. An a ubiquinone-binding site is contributed by His-201. 4 helical membrane passes run 226–246, 288–308, 320–340, and 347–367; these read YKDL…ALFS, LGGV…PLLH, ITQF…WIGG, and FIII…VLFP.

This sequence belongs to the cytochrome b family. In terms of assembly, the cytochrome bc1 complex contains 3 respiratory subunits (MT-CYB, CYC1 and UQCRFS1), 2 core proteins (UQCRC1 and UQCRC2) and probably 6 low-molecular weight proteins. Heme b is required as a cofactor.

The protein resides in the mitochondrion inner membrane. Component of the ubiquinol-cytochrome c reductase complex (complex III or cytochrome b-c1 complex) that is part of the mitochondrial respiratory chain. The b-c1 complex mediates electron transfer from ubiquinol to cytochrome c. Contributes to the generation of a proton gradient across the mitochondrial membrane that is then used for ATP synthesis. The polypeptide is Cytochrome b (mt-cyb) (Carassius auratus (Goldfish)).